The primary structure comprises 239 residues: Large ribosomal subunit protein eL32 (239 aa).

2 stretches are compositionally biased toward acidic residues: residues 1–12 (MSDENDTPEELA) and 67–91 (VEAD…ADVE). Disordered regions lie at residues 1 to 23 (MSDE…SKAE) and 64 to 178 (GLEV…HPSG). Residues 92-113 (TELRARGLTEKTPDLSEDEQRL) show a composition bias toward basic and acidic residues. Residues 130-155 (YHKKKRTPTSWRRPKGTLSKQRRGIK) are compositionally biased toward basic residues.

It belongs to the eukaryotic ribosomal protein eL32 family.

This Halobacterium salinarum (strain ATCC 700922 / JCM 11081 / NRC-1) (Halobacterium halobium) protein is Large ribosomal subunit protein eL32 (rpl32e).